The sequence spans 316 residues: Metal tolerance protein 8 (316 aa).

The Cytoplasmic portion of the chain corresponds to 1–15 (MGPVRHILNERKSRK). Residues 16 to 36 (IAAFLLINTAYMFVEFTSGFM) form a helical membrane-spanning segment. Topologically, residues 37–45 (SDSLGLISD) are vacuolar. A helical membrane pass occupies residues 46 to 66 (ACHMLFDCAALAIGLYASYIA). Residues 67 to 80 (RLPANGLYNYGRGR) are Cytoplasmic-facing. The chain crosses the membrane as a helical span at residues 81 to 101 (FEVLSGYVNAVFLVLVGALIV). The Vacuolar segment spans residues 102–116 (LESFERILEPREIST). A helical transmembrane segment spans residues 117–137 (SSLLTVSIGGLVVNVIGLVFF). At 138 to 176 (HEEHHHAHGEAHSCNGGLQSSENHNKSRNRHHIDHNMEG) the chain is on the cytoplasmic side. Residues 147–166 (EAHSCNGGLQSSENHNKSRN) form a disordered region. The helical transmembrane segment at 177-197 (IFLHVLADTMGSVGVVISTLL) threads the bilayer. The Vacuolar segment spans residues 198–202 (IKYKG). Residues 203–223 (WLIADPICSVFISIMIVSSVL) traverse the membrane as a helical segment. Over 224–316 (PLLRNSAEIL…LTIQIECVKR (93 aa)) the chain is Cytoplasmic.

It belongs to the cation diffusion facilitator (CDF) transporter (TC 2.A.4) family. SLC30A subfamily.

It localises to the vacuole membrane. Its function is as follows. Involved in sequestration of excess metal in the cytoplasm into vacuoles to maintain metal homeostasis. The polypeptide is Metal tolerance protein 8 (MTP8) (Oryza sativa subsp. japonica (Rice)).